We begin with the raw amino-acid sequence, 801 residues long: Disks large homolog 4 (801 aa).

An L27 domain is found at 4 to 60 (KREDTERALQAMEACQSAGDEGFRTRAERLLTIFQSDLFQALLDIQEFYELTVFENQ). 2 PDZ domains span residues 153-240 (EITL…LRHK) and 248-335 (ELKL…AKTL). Residues 339–373 (HHQDAYNPPDITSSYSPHMDMSDYPQALSPSSPRR) form a disordered region. The region spanning 393-474 (RVVIHRGSTG…TVTIITQYRP (82 aa)) is the PDZ 3 domain. Residues 507–577 (KRSFFIRALF…PSKRRVERKE (71 aa)) enclose the SH3 domain. In terms of domain architecture, Guanylate kinase-like spans 610–786 (ARPVIILGPS…IYHHVKSVIE (177 aa)).

This sequence belongs to the MAGUK family. In terms of processing, ubiquitinated by MDM2 in response to NMDA receptor activation, leading to proteasome-mediated degradation of DLG4 which is required for AMPA receptor endocytosis. Post-translationally, palmitoylated. Palmitoylation is required for targeting to postsynaptic density, plasma membrane and synapses.

The protein localises to the cell membrane. Its subcellular location is the postsynaptic density. It localises to the synapse. Functionally, postsynaptic scaffolding protein that plays a critical role in synaptogenesis and synaptic plasticity by providing a platform for the postsynaptic clustering of crucial synaptic proteins. This chain is Disks large homolog 4 (dlg4), found in Danio rerio (Zebrafish).